Consider the following 309-residue polypeptide: Protein FdhE homolog (309 aa).

The protein belongs to the FdhE family.

It localises to the cytoplasm. Functionally, necessary for formate dehydrogenase activity. In Citrobacter koseri (strain ATCC BAA-895 / CDC 4225-83 / SGSC4696), this protein is Protein FdhE homolog.